The chain runs to 83 residues: ATP synthase subunit c (83 aa).

Transmembrane regions (helical) follow at residues 10-30 (IAVA…FGLL) and 52-72 (MFIV…IALY).

This sequence belongs to the ATPase C chain family. In terms of assembly, F-type ATPases have 2 components, F(1) - the catalytic core - and F(0) - the membrane proton channel. F(1) has five subunits: alpha(3), beta(3), gamma(1), delta(1), epsilon(1). F(0) has three main subunits: a(1), b(2) and c(10-14). The alpha and beta chains form an alternating ring which encloses part of the gamma chain. F(1) is attached to F(0) by a central stalk formed by the gamma and epsilon chains, while a peripheral stalk is formed by the delta and b chains.

The protein localises to the cell inner membrane. Functionally, f(1)F(0) ATP synthase produces ATP from ADP in the presence of a proton or sodium gradient. F-type ATPases consist of two structural domains, F(1) containing the extramembraneous catalytic core and F(0) containing the membrane proton channel, linked together by a central stalk and a peripheral stalk. During catalysis, ATP synthesis in the catalytic domain of F(1) is coupled via a rotary mechanism of the central stalk subunits to proton translocation. Key component of the F(0) channel; it plays a direct role in translocation across the membrane. A homomeric c-ring of between 10-14 subunits forms the central stalk rotor element with the F(1) delta and epsilon subunits. This is ATP synthase subunit c from Shewanella denitrificans (strain OS217 / ATCC BAA-1090 / DSM 15013).